A 327-amino-acid polypeptide reads, in one-letter code: ATP-dependent 6-phosphofructokinase (327 aa).

G12 contributes to the ATP binding site. ADP-binding positions include 22–26 (RGVVR) and 55–60 (RYSVSD). ATP-binding positions include 73–74 (RF) and 103–106 (GDGS). D104 lines the Mg(2+) pocket. 127–129 (TID) is a substrate binding site. D129 (proton acceptor) is an active-site residue. R156 is an ADP binding site. Residues R164 and 171-173 (MGR) each bind substrate. ADP-binding positions include 187–189 (GCE), K213, and 215–217 (KKH). Substrate contacts are provided by residues E224, R245, and 251–254 (HIQR).

The protein belongs to the phosphofructokinase type A (PFKA) family. ATP-dependent PFK group I subfamily. Prokaryotic clade 'B1' sub-subfamily. In terms of assembly, homotetramer. Mg(2+) is required as a cofactor.

The protein resides in the cytoplasm. It carries out the reaction beta-D-fructose 6-phosphate + ATP = beta-D-fructose 1,6-bisphosphate + ADP + H(+). Its pathway is carbohydrate degradation; glycolysis; D-glyceraldehyde 3-phosphate and glycerone phosphate from D-glucose: step 3/4. Allosterically activated by ADP and other diphosphonucleosides, and allosterically inhibited by phosphoenolpyruvate. Functionally, catalyzes the phosphorylation of D-fructose 6-phosphate to fructose 1,6-bisphosphate by ATP, the first committing step of glycolysis. In Hamiltonella defensa subsp. Acyrthosiphon pisum (strain 5AT), this protein is ATP-dependent 6-phosphofructokinase.